We begin with the raw amino-acid sequence, 465 residues long: tRNA-2-methylthio-N(6)-dimethylallyladenosine synthase (465 aa).

One can recognise an MTTase N-terminal domain in the interval 5–125; that stretch reads RKLHIKSFGC…LPELLEKARR (121 aa). Cys-14, Cys-50, Cys-88, Cys-166, Cys-170, and Cys-173 together coordinate [4Fe-4S] cluster. Residues 152–382 enclose the Radical SAM core domain; it reads RARGVSAFVT…QLQGLIDSQQ (231 aa). The 63-residue stretch at 387–449 folds into the TRAM domain; it reads RASIGTTVDV…RYSLIGELVK (63 aa).

This sequence belongs to the methylthiotransferase family. MiaB subfamily. Monomer. It depends on [4Fe-4S] cluster as a cofactor.

It localises to the cytoplasm. It catalyses the reaction N(6)-dimethylallyladenosine(37) in tRNA + (sulfur carrier)-SH + AH2 + 2 S-adenosyl-L-methionine = 2-methylsulfanyl-N(6)-dimethylallyladenosine(37) in tRNA + (sulfur carrier)-H + 5'-deoxyadenosine + L-methionine + A + S-adenosyl-L-homocysteine + 2 H(+). In terms of biological role, catalyzes the methylthiolation of N6-(dimethylallyl)adenosine (i(6)A), leading to the formation of 2-methylthio-N6-(dimethylallyl)adenosine (ms(2)i(6)A) at position 37 in tRNAs that read codons beginning with uridine. The sequence is that of tRNA-2-methylthio-N(6)-dimethylallyladenosine synthase from Rhodopseudomonas palustris (strain BisA53).